Here is a 473-residue protein sequence, read N- to C-terminus: Probable cytosolic iron-sulfur protein assembly protein 1 (473 aa).

The interval 1–25 (MPSSTPGGSLKHLSDLTPPSQDRTW) is disordered. 2 WD repeats span residues 11 to 58 (KHLS…LLST) and 62 to 104 (GHKR…GRAE). The segment at 112–133 (GGLAEADRQEGDDTDGDEEDED) is disordered. The segment covering 123–133 (DDTDGDEEDED) has biased composition (acidic residues). WD repeat units follow at residues 144-183 (GHDSEVKSVSWSSGGSLLATCSRDKSIWIWEDLEDGDNNF), 191-230 (EHSGDVKWVAWHPEEECLASGSYDDTIRLWREDVDDWGQV), 235-313 (GHEG…KPPP), and 341-380 (MHDLSIYSVAWSKKTGLIASTGADGRIVIYQERFTSKPPV). Positions 377–405 (KPPVHTTSEQDKPDSARETQKANGERTAP) are disordered. Basic and acidic residues predominate over residues 384–400 (SEQDKPDSARETQKANG). One copy of the WD 7 repeat lies at 438–473 (SQQQNFDNSEMDHANEEEVLLSTGDDGVVRVWTLER).

Belongs to the WD repeat CIA1 family.

Functionally, essential component of the cytosolic iron-sulfur (Fe/S) protein assembly machinery. Required for the maturation of extramitochondrial Fe/S proteins. This Coccidioides immitis (strain RS) (Valley fever fungus) protein is Probable cytosolic iron-sulfur protein assembly protein 1.